Reading from the N-terminus, the 503-residue chain is Type II secretion system ATPase E (503 aa).

Zn(2+) contacts are provided by Cys397, Cys400, Cys430, and Cys433.

The protein belongs to the GSP E family. Forms homooligomers; most probably hexamers. Interacts with EpsL/GspL. Zn(2+) serves as cofactor.

It localises to the cell inner membrane. The enzyme catalyses ATP + H2O + cellular proteinSide 1 = ADP + phosphate + cellular proteinSide 2.. Functionally, ATPase component of the type II secretion system required for the energy-dependent secretion of extracellular factors such as proteases and toxins from the periplasm. Acts as a molecular motor to provide the energy that is required for assembly of the pseudopilus and the extrusion of substrates generated in the cytoplasm. The polypeptide is Type II secretion system ATPase E (epsE) (Vibrio cholerae serotype O1 (strain ATCC 39315 / El Tor Inaba N16961)).